A 310-amino-acid polypeptide reads, in one-letter code: Mitochondrial 2-oxodicarboxylate carrier 1 (310 aa).

The next 6 membrane-spanning stretches (helical) occupy residues 9–29, 78–97, 126–146, 179–199, 219–239, and 281–301; these read LPFI…LLVM, SHLY…KRAI, IYSG…FELV, GLEA…GIIF, LIAG…FDVV, and MRLA…MDFF. Solcar repeat units follow at residues 9–108, 120–204, and 213–300; these read LPFI…FQTF, MTQK…IRKL, and EKTR…VMDF.

Belongs to the mitochondrial carrier (TC 2.A.29) family.

It localises to the mitochondrion inner membrane. Transports C5-C7 oxodicarboxylates across the inner membranes of mitochondria. Can transport 2-oxoadipate, 2-oxoglutarate, adipate, glutarate, 2-oxopimelate, oxaloacetate, citrate and malate. The main physiological role is probably to supply 2-oxoadipate and 2-oxoglutarate from the mitochondrial matrix to the cytosol where they are used in the biosynthesis of lysine and glutamate, respectively, and in lysine catabolism. The protein is Mitochondrial 2-oxodicarboxylate carrier 1 (ODC1) of Saccharomyces cerevisiae (strain ATCC 204508 / S288c) (Baker's yeast).